We begin with the raw amino-acid sequence, 428 residues long: Adenylosuccinate synthetase (428 aa).

GTP contacts are provided by residues 12–18 and 40–42; these read GDEGKGK and GHT. Residue aspartate 13 is the Proton acceptor of the active site. Mg(2+) is bound by residues aspartate 13 and glycine 40. IMP is bound by residues 13-16, 38-41, threonine 128, arginine 142, glutamine 222, threonine 237, and arginine 301; these read DEGK and NAGH. Residue histidine 41 is the Proton donor of the active site. 297–303 contacts substrate; sequence TVTGRSR. GTP contacts are provided by residues arginine 303, 329–331, and 411–413; these read KLD and STS.

It belongs to the adenylosuccinate synthetase family. As to quaternary structure, homodimer. The cofactor is Mg(2+).

The protein localises to the cytoplasm. The catalysed reaction is IMP + L-aspartate + GTP = N(6)-(1,2-dicarboxyethyl)-AMP + GDP + phosphate + 2 H(+). Its pathway is purine metabolism; AMP biosynthesis via de novo pathway; AMP from IMP: step 1/2. Functionally, plays an important role in the de novo pathway of purine nucleotide biosynthesis. Catalyzes the first committed step in the biosynthesis of AMP from IMP. This is Adenylosuccinate synthetase from Phenylobacterium zucineum (strain HLK1).